A 469-amino-acid polypeptide reads, in one-letter code: MTMSQEENPVKPWGGRFSEPTDAFVERFTASVTFDQRLYHHDINGSIAHATMLASVGVLSEDEKTAIIDGLEAIRSDIVEGKFDWSISLEDVHMNIEAELTKRIGITGKKLHTGRSRNDQVATDIRLYLRDEIDNIAKELTRLQSGILDLAEREADTIMPGFTHLQTAQPVTFGHHLMAWYEMMTRDYTRLMDCRERLNQSPLGAAALAGTTYPIDREQTAALLGFNHPTRNSLDSVSDRDFAIEFSAFAAILMTHLSRASEELVLWASAQFNFINLPDRFCTGSSIMPQKKNPDVPELVRGKTGRVNGHLISLLTLMKSQPLAYNKDNQEDKEPLFDAIDTVKDCLRAFADMVPAIESKKESMYEAAKRGFSTATDLADYLVRKGIPFRDSHEVVGKAVGYGVETGKDLSEMTLEELQGFSKEIQQDVFDVLTLEGSVAARNHIGGTAPAQVRIAVENAKQELEGRNS.

This sequence belongs to the lyase 1 family. Argininosuccinate lyase subfamily.

It is found in the cytoplasm. It carries out the reaction 2-(N(omega)-L-arginino)succinate = fumarate + L-arginine. It functions in the pathway amino-acid biosynthesis; L-arginine biosynthesis; L-arginine from L-ornithine and carbamoyl phosphate: step 3/3. This Saccharophagus degradans (strain 2-40 / ATCC 43961 / DSM 17024) protein is Argininosuccinate lyase.